A 292-amino-acid polypeptide reads, in one-letter code: NAC domain-containing protein 96 (292 aa).

The NAC domain occupies 6–158; sequence LPPGFRFHPT…AFVLCRVAMK (153 aa). The DNA-binding element occupies 106 to 164; it reads IGYRKTLVFYKGRAPLGDRSNWIMHEYRLCDDDTSQGSQNLKGAFVLCRVAMKNEIKTN. The segment at 171-199 is disordered; the sequence is PSEQTIGSGESSGLSSRVTSPSRDETMPF. Residues 172-191 show a composition bias toward polar residues; sequence SEQTIGSGESSGLSSRVTSP.

As to quaternary structure, interacts with ABF2 and ABF4. Expressed in roots, rosettes leaves, cauline leaves and stems.

The protein localises to the nucleus. Functionally, transcriptional activator involved in the positive regulation of abscisic acid (ABA) responsive genes. Acts as a positive factor of ABA-mediated responses. Involved in the transcriptional activation of ABA-inducible genes in response to dehydration and osmotic stresses. Plays a positive role in both stomatal closure and water loss under dehydration stress conditions. Acts synergistically with ABF2 to activate the dehydration stress-response factor RD29A transcription. Binds to the consensus core cis-acting elements 5'-CGTA-3' and 5'-CACG-3' at the RD29A promoter. Involved in hypocotyl graft union formation. Required for the auxin-mediated promotion of vascular tissue proliferation during hypocotyl graft attachment. The chain is NAC domain-containing protein 96 from Arabidopsis thaliana (Mouse-ear cress).